Consider the following 315-residue polypeptide: Probable cytochrome c oxidase subunit 2 (315 aa).

The next 3 membrane-spanning stretches (helical) occupy residues 54–74 (IALI…PLPW), 96–116 (LLYI…FVCI), and 133–153 (VLIE…IAVP). Cu cation contacts are provided by His235, Cys270, Cys274, and His278.

It belongs to the cytochrome c oxidase subunit 2 family. The cofactor is Cu cation. Heme serves as cofactor.

It is found in the cell membrane. The catalysed reaction is 4 Fe(II)-[cytochrome c] + O2 + 8 H(+)(in) = 4 Fe(III)-[cytochrome c] + 2 H2O + 4 H(+)(out). Functionally, subunits I and II form the functional core of the enzyme complex. Electrons originating in cytochrome c are transferred via heme a and Cu(A) to the binuclear center formed by heme a3 and Cu(B). The protein is Probable cytochrome c oxidase subunit 2 (ctaC) of Rickettsia conorii (strain ATCC VR-613 / Malish 7).